A 176-amino-acid polypeptide reads, in one-letter code: Urease accessory protein UreE (176 aa).

Positions 134–176 are disordered; it reads EAGAYGSGGHHHHGESSQGHAHGPLAPIPVHQKIHRPSDIPSR.

This sequence belongs to the UreE family.

It localises to the cytoplasm. Its function is as follows. Involved in urease metallocenter assembly. Binds nickel. Probably functions as a nickel donor during metallocenter assembly. The chain is Urease accessory protein UreE from Nitrosospira multiformis (strain ATCC 25196 / NCIMB 11849 / C 71).